The chain runs to 264 residues: MQKLKLHGFNNLTKSLSFCIYDICYAKTADDRDGYITYIDEQYNANRLTEILSETCSMIGANILNIARQDYEPQGASVTILVSEEPVDPGSIDTSEHPGPLPESVVAHLDKSHICVHTYPESHPEGGLCTFRADIEVSTCGVISPLKALNYLIHQLESDIVTMDYRVRGFTRDINGVKHYIDHEINSIQNFMSKDMKALYHMMDVNVYQENIFHTKIMLKDFDLKHYLFNARPDDLSAEERKAITDLLYKEMQEIYYGRNLPVL.

Residue Ser112 is the Schiff-base intermediate with substrate; via pyruvic acid of the active site. Ser112 is modified (pyruvic acid (Ser); by autocatalysis). His117 serves as the catalytic Proton acceptor; for processing activity. Cys140 (proton donor; for catalytic activity) is an active-site residue.

Belongs to the prokaryotic AdoMetDC family. Type 2 subfamily. In terms of assembly, heterooctamer of four alpha and four beta chains arranged as a tetramer of alpha/beta heterodimers. The cofactor is pyruvate. Is synthesized initially as an inactive proenzyme. Formation of the active enzyme involves a self-maturation process in which the active site pyruvoyl group is generated from an internal serine residue via an autocatalytic post-translational modification. Two non-identical subunits are generated from the proenzyme in this reaction, and the pyruvate is formed at the N-terminus of the alpha chain, which is derived from the carboxyl end of the proenzyme. The post-translation cleavage follows an unusual pathway, termed non-hydrolytic serinolysis, in which the side chain hydroxyl group of the serine supplies its oxygen atom to form the C-terminus of the beta chain, while the remainder of the serine residue undergoes an oxidative deamination to produce ammonia and the pyruvoyl group blocking the N-terminus of the alpha chain.

It catalyses the reaction S-adenosyl-L-methionine + H(+) = S-adenosyl 3-(methylsulfanyl)propylamine + CO2. It participates in amine and polyamine biosynthesis; S-adenosylmethioninamine biosynthesis; S-adenosylmethioninamine from S-adenosyl-L-methionine: step 1/1. Its function is as follows. Catalyzes the decarboxylation of S-adenosylmethionine to S-adenosylmethioninamine (dcAdoMet), the propylamine donor required for the synthesis of the polyamines spermine and spermidine from the diamine putrescine. The protein is S-adenosylmethionine decarboxylase proenzyme of Sodalis glossinidius (strain morsitans).